Here is a 634-residue protein sequence, read N- to C-terminus: tRNA uridine 5-carboxymethylaminomethyl modification enzyme MnmG (634 aa).

14-19 (GGGHAG) is an FAD binding site. 279–293 (GPRYCPSIEDKVVRF) is an NAD(+) binding site.

This sequence belongs to the MnmG family. In terms of assembly, homodimer. Heterotetramer of two MnmE and two MnmG subunits. It depends on FAD as a cofactor.

Its subcellular location is the cytoplasm. Its function is as follows. NAD-binding protein involved in the addition of a carboxymethylaminomethyl (cmnm) group at the wobble position (U34) of certain tRNAs, forming tRNA-cmnm(5)s(2)U34. In Xanthomonas campestris pv. campestris (strain B100), this protein is tRNA uridine 5-carboxymethylaminomethyl modification enzyme MnmG.